The primary structure comprises 179 residues: Adaptation to cold protein A (179 aa).

A disordered region spans residues 133–179 (KATPAPKRSADDDFEDEDSDYADYSDDDDDEGEEEDGYYDHYDDEDR). Over residues 144 to 179 (DDFEDEDSDYADYSDDDDDEGEEEDGYYDHYDDEDR) the composition is skewed to acidic residues.

Part of an operon involved in cold adaptation. This chain is Adaptation to cold protein A, found in Shewanella oneidensis (strain ATCC 700550 / JCM 31522 / CIP 106686 / LMG 19005 / NCIMB 14063 / MR-1).